The primary structure comprises 83 residues: Hainantoxin-III 6 (83 aa).

The N-terminal stretch at 1 to 21 (MKASMFLALAGLVLLFVVGYA) is a signal peptide. A propeptide spanning residues 22–48 (SESEEKESPRELLSKIFAVDDFKGEER) is cleaved from the precursor. 3 disulfide bridges follow: cysteine 50–cysteine 65, cysteine 57–cysteine 70, and cysteine 64–cysteine 77. At leucine 81 the chain carries Leucine amide.

Belongs to the neurotoxin 10 (Hwtx-1) family. 15 (Hntx-3) subfamily. In terms of assembly, monomer. As to expression, expressed by the venom gland.

The protein localises to the secreted. Selective antagonist of neuronal tetrodotoxin (TTX)-sensitive voltage-gated sodium channels (IC(50)=1270 nM on Nav1.1/SCN1A, 270 nM on Nav1.2/SCN2A, 491 nM on Nav1.3/SCN3A and 232 nM on Nav1.7/SCN9A). This toxin suppress Nav1.7 current amplitude without significantly altering the activation, inactivation, and repriming kinetics. Short extreme depolarizations partially activate the toxin-bound channel, indicating voltage-dependent inhibition of this toxin. This toxin increases the deactivation of the Nav1.7 current after extreme depolarizations. The toxin-Nav1.7 complex is gradually dissociated upon prolonged strong depolarizations in a voltage-dependent manner, and the unbound toxin rebinds to Nav1.7 after a long repolarization. Moreover, analysis of chimeric channels showed that the DIIS3-S4 linker is critical for toxin binding to Nav1.7. These data are consistent with this toxin interacting with Nav1.7 site 4 and trapping the domain II voltage sensor in the closed state. The chain is Hainantoxin-III 6 from Cyriopagopus hainanus (Chinese bird spider).